The chain runs to 430 residues: Protein IQ-DOMAIN 3 (430 aa).

The tract at residues 1–36 is disordered; that stretch reads MGKSWFSAVKKALSPEPKQKKEQKPHKSKKWFGKSK. The Nuclear localization signal 1 motif lies at 9 to 16; that stretch reads VKKALSPE. A compositionally biased stretch (basic residues) spans 23 to 35; the sequence is QKPHKSKKWFGKS. Residues 107 to 135 enclose the IQ domain; sequence EEIAAIKIQTAFRGYMARRALRALRGLVR. Positions 170–224 form a coiled coil; that stretch reads RLRLSEDKQALTRQLQQKHNKDFDKTGENWNDSTLSREKVEANMLNKQVATMRRE. Positions 213-231 are calmodulin-binding; the sequence is MLNKQVATMRREKALAYAF. Disordered regions lie at residues 271–368 and 385–430; these read ENHS…SQSV and SNLS…TNLA. Over residues 286–295 the composition is skewed to low complexity; it reads ARSVASRAMS. Positions 326-340 are enriched in polar residues; it reads SEDSNSIVSFQSEQP. Residues 396–403 carry the Nuclear localization signal 2 motif; it reads AKKRLSFS.

The protein belongs to the IQD family. Binds to multiple calmodulin (CaM) in the presence of Ca(2+) and CaM-like proteins.

The protein localises to the nucleus. It localises to the nucleolus. It is found in the cytoplasm. The protein resides in the cytoskeleton. In terms of biological role, may be involved in cooperative interactions with calmodulins or calmodulin-like proteins. Recruits calmodulin proteins to microtubules, thus being a potential scaffold in cellular signaling and trafficking. May associate with nucleic acids and regulate gene expression at the transcriptional or post-transcriptional level. The protein is Protein IQ-DOMAIN 3 of Arabidopsis thaliana (Mouse-ear cress).